The primary structure comprises 95 residues: Large ribosomal subunit protein bL25 (95 aa).

This sequence belongs to the bacterial ribosomal protein bL25 family. In terms of assembly, part of the 50S ribosomal subunit; part of the 5S rRNA/L5/L18/L25 subcomplex. Contacts the 5S rRNA. Binds to the 5S rRNA independently of L5 and L18.

Its function is as follows. This is one of the proteins that binds to the 5S RNA in the ribosome where it forms part of the central protuberance. This is Large ribosomal subunit protein bL25 from Shewanella woodyi (strain ATCC 51908 / MS32).